The following is a 563-amino-acid chain: MDIKRTILIVALAIVTYVGVLKWNQDYGQAAMPTQNVAASTTAPGIPDTAAGTNGSASADVPSASATANTAAAPLETPAVASKDLIHVKTDVLDLAIDPVGGDVVQLRLPLYPRRQDRPDVPFQLFDNGGERTFLAQSGLTGTNGPDARAAGRPVYTSTQKTYQLADGQDTMVVDLKFSENGVNYIKRFTFKRGLYDLVMTYVVDNQSAQPWAGNLFAQLKRDASSDPSSTTATGTATYLGAALWTAAEPYKKVSMKDIDKGQIKETVQGGWVAWLQHYFVTAWIPDHNATNAVQTRKDSQGNYIIGFTSPTLSVAPGAQGETSATLYAGPKSQAVLKELSPGLELTVDYGFLWFIAQPIFWLLQHIHAILGNWGWSIIVLTMLIKGLFFPLSAASYKSMARMRAVAPKLALLKEQHGDDRQKMSQAMMELYKKEKINPLGGCLPILVQMPVFLSLYWVLLESVEMRQAPWILWITDLSIKDPFFILPIIMGATMFIQQRLNPTPPDPMQAKVMKMMPIIFTFFFLWFPAGLVLYWVVNNTLSIAQQAYITRKIEAATKKAAA.

Residues 1–21 (MDIKRTILIVALAIVTYVGVL) form a helical membrane-spanning segment. Positions 43 to 62 (APGIPDTAAGTNGSASADVP) are disordered. The next 5 helical transmembrane spans lie at 344-364 (LELT…FWLL), 370-390 (ILGN…GLFF), 440-460 (LGGC…YWVL), 471-491 (WILW…PIIM), and 518-538 (PIIF…YWVV).

This sequence belongs to the OXA1/ALB3/YidC family. Type 1 subfamily. In terms of assembly, interacts with the Sec translocase complex via SecD. Specifically interacts with transmembrane segments of nascent integral membrane proteins during membrane integration.

It is found in the cell inner membrane. Functionally, required for the insertion and/or proper folding and/or complex formation of integral membrane proteins into the membrane. Involved in integration of membrane proteins that insert both dependently and independently of the Sec translocase complex, as well as at least some lipoproteins. Aids folding of multispanning membrane proteins. The protein is Membrane protein insertase YidC of Pseudomonas savastanoi pv. phaseolicola (strain 1448A / Race 6) (Pseudomonas syringae pv. phaseolicola (strain 1448A / Race 6)).